We begin with the raw amino-acid sequence, 293 residues long: 16S rRNA (guanine(1405)-N(7))-methyltransferase (293 aa).

S-adenosyl-L-methionine-binding positions include phenylalanine 47, 80 to 82, arginine 86, alanine 111, aspartate 134, 160 to 161, leucine 176, and glutamine 185; these read HAS and DL. Low complexity predominate over residues 258-274; it reads GRPAPAEGAAEPGATRP. A disordered region spans residues 258-293; it reads GRPAPAEGAAEPGATRPVVDVPATARPDADRVDPTG. Basic and acidic residues predominate over residues 284–293; the sequence is PDADRVDPTG.

This sequence belongs to the methyltransferase superfamily. Aminoglycoside resistance family.

It carries out the reaction guanosine(1405) in 16S rRNA + S-adenosyl-L-methionine = N(7)-methylguanosine(1405) in 16S rRNA + S-adenosyl-L-homocysteine. In terms of biological role, specifically methylates the N(7) position of guanine 1405 in 16S rRNA. Confers resistance to aminoglycosides. This is 16S rRNA (guanine(1405)-N(7))-methyltransferase (fmrO) from Micromonospora olivasterospora.